The following is a 451-amino-acid chain: Exodeoxyribonuclease 7 large subunit (451 aa).

It belongs to the XseA family. As to quaternary structure, heterooligomer composed of large and small subunits.

The protein localises to the cytoplasm. It catalyses the reaction Exonucleolytic cleavage in either 5'- to 3'- or 3'- to 5'-direction to yield nucleoside 5'-phosphates.. In terms of biological role, bidirectionally degrades single-stranded DNA into large acid-insoluble oligonucleotides, which are then degraded further into small acid-soluble oligonucleotides. In Thiobacillus denitrificans (strain ATCC 25259 / T1), this protein is Exodeoxyribonuclease 7 large subunit.